The primary structure comprises 191 residues: Small ribosomal subunit protein uS11m (191 aa).

Positions Pro37 to Pro62 are disordered. Residues Arg38 to Ala53 show a composition bias toward basic and acidic residues.

It belongs to the universal ribosomal protein uS11 family. As to quaternary structure, component of the mitochondrial ribosome small subunit (28S) which comprises a 12S rRNA and about 30 distinct proteins.

The protein resides in the mitochondrion. The protein is Small ribosomal subunit protein uS11m (Mrps11) of Mus musculus (Mouse).